Here is a 574-residue protein sequence, read N- to C-terminus: 5'-nucleotidase (574 aa).

The first 26 residues, 1 to 26 (MCPRAARAPATLLLALGAVLWPAAGA), serve as a signal peptide directing secretion. Zn(2+) is bound by residues D36 and H38. Cysteines 51 and 57 form a disulfide. N53 is a glycosylation site (N-linked (GlcNAc...) asparagine). Zn(2+) is bound by residues D85, N117, H220, and H243. Residues N311 and N333 are each glycosylated (N-linked (GlcNAc...) asparagine). 2 disulfide bridges follow: C353/C358 and C365/C387. Residue R354 coordinates AMP. R354 contacts IMP. 2 residues coordinate AMP: N390 and R395. IMP contacts are provided by N390 and R395. N403 carries N-linked (GlcNAc...) asparagine glycosylation. F417 contributes to the AMP binding site. F417 serves as a coordination point for IMP. An intrachain disulfide couples C476 to C479. Residues F500 and D506 each contribute to the AMP site. Residues F500 and D506 each coordinate IMP. S549 is lipidated: GPI-anchor amidated serine. Positions 550–574 (TGSHCHGSFSLIFLSLWAVIFVLYQ) are cleaved as a propeptide — removed in mature form.

It belongs to the 5'-nucleotidase family. As to quaternary structure, homodimer. Zn(2+) is required as a cofactor.

The protein localises to the cell membrane. The enzyme catalyses a ribonucleoside 5'-phosphate + H2O = a ribonucleoside + phosphate. The catalysed reaction is a 2'-deoxyribonucleoside 5'-phosphate + H2O = a 2'-deoxyribonucleoside + phosphate. It catalyses the reaction dTMP + H2O = thymidine + phosphate. It carries out the reaction CMP + H2O = cytidine + phosphate. The enzyme catalyses IMP + H2O = inosine + phosphate. The catalysed reaction is AMP + H2O = adenosine + phosphate. It catalyses the reaction GMP + H2O = guanosine + phosphate. It carries out the reaction UMP + H2O = uridine + phosphate. The enzyme catalyses dAMP + H2O = 2'-deoxyadenosine + phosphate. The catalysed reaction is dCMP + H2O = 2'-deoxycytidine + phosphate. Its activity is regulated as follows. Inhibited by adenosine 5'-(alpha,beta-methylene)-diphosphate (AMPCP). In terms of biological role, catalyzes the hydrolysis of nucleotide monophosphates, releasing inorganic phosphate and the corresponding nucleoside, with AMP being the preferred substrate. Shows a preference for ribonucleotide monophosphates over their equivalent deoxyribose forms. Other substrates include IMP, UMP, GMP, CMP, dAMP, dCMP, dTMP, NAD and NMN. The protein is 5'-nucleotidase (NT5E) of Homo sapiens (Human).